The sequence spans 162 residues: Phosphopantetheine adenylyltransferase (162 aa).

Residue threonine 10 coordinates substrate. ATP-binding positions include 10–11 (TF) and histidine 18. Substrate contacts are provided by lysine 42, leucine 74, and arginine 88. ATP-binding positions include 89-91 (GLR), glutamate 99, and 124-130 (FSCISST).

It belongs to the bacterial CoaD family. As to quaternary structure, homohexamer. The cofactor is Mg(2+).

It is found in the cytoplasm. The catalysed reaction is (R)-4'-phosphopantetheine + ATP + H(+) = 3'-dephospho-CoA + diphosphate. It participates in cofactor biosynthesis; coenzyme A biosynthesis; CoA from (R)-pantothenate: step 4/5. In terms of biological role, reversibly transfers an adenylyl group from ATP to 4'-phosphopantetheine, yielding dephospho-CoA (dPCoA) and pyrophosphate. The protein is Phosphopantetheine adenylyltransferase of Francisella tularensis subsp. novicida (strain U112).